The following is a 336-amino-acid chain: Acetyl-coenzyme A carboxylase carboxyl transferase subunit alpha (336 aa).

In terms of domain architecture, CoA carboxyltransferase C-terminal spans 48-308 (ALEAKVESLR…KSMLIEELQG (261 aa)).

The protein belongs to the AccA family. Acetyl-CoA carboxylase is a heterohexamer composed of biotin carboxyl carrier protein (AccB), biotin carboxylase (AccC) and two subunits each of ACCase subunit alpha (AccA) and ACCase subunit beta (AccD).

It localises to the cytoplasm. The enzyme catalyses N(6)-carboxybiotinyl-L-lysyl-[protein] + acetyl-CoA = N(6)-biotinyl-L-lysyl-[protein] + malonyl-CoA. Its pathway is lipid metabolism; malonyl-CoA biosynthesis; malonyl-CoA from acetyl-CoA: step 1/1. In terms of biological role, component of the acetyl coenzyme A carboxylase (ACC) complex. First, biotin carboxylase catalyzes the carboxylation of biotin on its carrier protein (BCCP) and then the CO(2) group is transferred by the carboxyltransferase to acetyl-CoA to form malonyl-CoA. The polypeptide is Acetyl-coenzyme A carboxylase carboxyl transferase subunit alpha (Chlorobaculum parvum (strain DSM 263 / NCIMB 8327) (Chlorobium vibrioforme subsp. thiosulfatophilum)).